We begin with the raw amino-acid sequence, 649 residues long: Quinol oxidase subunit 1 (649 aa).

The Extracellular segment spans residues 1–13 (MKFKWDEFFVTGD). Residues 14–34 (PLILGAQVSIALSTIAIIFVL) form a helical membrane-spanning segment. The Cytoplasmic portion of the chain corresponds to 35-55 (TYFKKWKWLWSEWITTVDHKK). Residues 56–76 (LGIMYIISAVIMLFRGGVDGL) traverse the membrane as a helical segment. Topologically, residues 77-104 (MMRAQLALPNNSFLDSNHYNEIFTTHGT) are extracellular. Residue histidine 102 coordinates Fe(II)-heme a. The chain crosses the membrane as a helical span at residues 105–125 (IMIIFMAMPFLIGLINVVVPL). Topologically, residues 126–139 (QIGARDVAFPYLNN) are cytoplasmic. The chain crosses the membrane as a helical span at residues 140-160 (LSFWTFFVGAMLFNISFVIGG). The Extracellular segment spans residues 161–187 (SPNAGWTSYMPLASNDMSPGPGENYYL). A helical transmembrane segment spans residues 188–208 (LGLQIAGIGTLMTGINFMVTI). Residues 209 to 228 (LKMRTKGMTLMRMPMFTWTT) are Cytoplasmic-facing. The helical transmembrane segment at 229–249 (LITMVIIVFAFPVLTVALALL) threads the bilayer. At 250-273 (SFDRLFGAHFFTLEAGGMPMLWAN) the chain is on the extracellular side. Residues 274 to 294 (LFWIWGHPEVYIVILPAFGIF) form a helical membrane-spanning segment. 2 residues coordinate Cu cation: histidine 280 and tyrosine 284. Positions 280-284 (HPEVY) form a cross-link, 1'-histidyl-3'-tyrosine (His-Tyr). Residues 295 to 305 (SEIISSFARKQ) lie on the Cytoplasmic side of the membrane. A helical membrane pass occupies residues 306 to 326 (LFGYTAMVGSIIAISVLSFLV). At 327 to 342 (WTHHFFTMGNSASVNS) the chain is on the extracellular side. Cu cation contacts are provided by histidine 329 and histidine 330. The chain crosses the membrane as a helical span at residues 343–363 (FFSITTMAISIPTGVKIFNWL). Residues 364–376 (FTMYKGRISFTTP) lie on the Cytoplasmic side of the membrane. The chain crosses the membrane as a helical span at residues 377–397 (MLWALAFIPNFVIGGVTGVML). Topologically, residues 398 to 415 (AMAAADYQYHNTYFLVSH) are extracellular. Residue histidine 415 participates in heme a3 binding. Residues 416–436 (FHYVLIAGTVFACFAGFIFWY) traverse the membrane as a helical segment. A Fe(II)-heme a-binding site is contributed by histidine 417. Topologically, residues 437-451 (PKMFGHKLNERIGKW) are cytoplasmic. The helical transmembrane segment at 452 to 472 (FFWIFMIGFNICFFPQYFLGL) threads the bilayer. The Extracellular segment spans residues 473-492 (QGMPRRIYTYGPNDGWTTLN). Residues 493–513 (FISTVGAFMMGVGFLILCYNI) form a helical membrane-spanning segment. Topologically, residues 514–585 (YYSFRYSTRE…KFKKIHMPSN (72 aa)) are cytoplasmic. A helical membrane pass occupies residues 586–603 (SGRPFFMSVAFGIAGFGL). The Extracellular portion of the chain corresponds to 604–606 (VFE). The chain crosses the membrane as a helical span at residues 607–624 (WYWMGVVGLIGVLLCMVL). Over 625 to 649 (RSFEYDNGYYISVDEIKETERKISE) the chain is Cytoplasmic.

This sequence belongs to the heme-copper respiratory oxidase family. Cu cation serves as cofactor. Requires ferriheme a as cofactor. It depends on Heme A3. as a cofactor.

It is found in the cell membrane. The enzyme catalyses 2 a quinol + O2 = 2 a quinone + 2 H2O. It participates in energy metabolism; oxidative phosphorylation. Its function is as follows. Catalyzes quinol oxidation with the concomitant reduction of oxygen to water. Major component for energy conversion during vegetative growth. The sequence is that of Quinol oxidase subunit 1 (qoxB) from Bacillus spizizenii (strain ATCC 23059 / NRRL B-14472 / W23) (Bacillus subtilis subsp. spizizenii).